Consider the following 466-residue polypeptide: UDP-N-acetylmuramate--L-alanine ligase (466 aa).

114–120 (GTHGKTT) lines the ATP pocket.

Belongs to the MurCDEF family.

Its subcellular location is the cytoplasm. It catalyses the reaction UDP-N-acetyl-alpha-D-muramate + L-alanine + ATP = UDP-N-acetyl-alpha-D-muramoyl-L-alanine + ADP + phosphate + H(+). Its pathway is cell wall biogenesis; peptidoglycan biosynthesis. Its function is as follows. Cell wall formation. The protein is UDP-N-acetylmuramate--L-alanine ligase of Mesorhizobium japonicum (strain LMG 29417 / CECT 9101 / MAFF 303099) (Mesorhizobium loti (strain MAFF 303099)).